A 223-amino-acid polypeptide reads, in one-letter code: Probable glutathione S-transferase (223 aa).

One can recognise a GST N-terminal domain in the interval 2 to 81; that stretch reads AEVKLLGFWY…YIDETFEGPS (80 aa). Residues Ser12, Lys39, Val53, and 65-66 contribute to the glutathione site; that span reads ES. One can recognise a GST C-terminal domain in the interval 86 to 212; it reads DPYDRALARF…ELLAFFRARF (127 aa).

Belongs to the GST superfamily. HSP26 family. In terms of tissue distribution, root tip-specific expression.

It catalyses the reaction RX + glutathione = an S-substituted glutathione + a halide anion + H(+). In Nicotiana tabacum (Common tobacco), this protein is Probable glutathione S-transferase.